The sequence spans 181 residues: Ferredoxin C 2, chloroplastic (181 aa).

A chloroplast-targeting transit peptide spans 1–44 (MALILPCTFCTSLQKKNFPINRRYITNFRRGATTATCEFRIPVE). Positions 59–151 (HKVTVHDRQR…DLEVETQDED (93 aa)) constitute a 2Fe-2S ferredoxin-type domain. [2Fe-2S] cluster contacts are provided by Cys97, Cys102, Cys105, and Cys135.

The protein belongs to the 2Fe2S plant-type ferredoxin family. The cofactor is [2Fe-2S] cluster.

The protein localises to the plastid. It is found in the chloroplast. In terms of biological role, ferredoxins are iron-sulfur proteins that transfer electrons in a wide variety of metabolic reactions. Mediates alternative electron partitioning in conditions of acceptor limitation at photosystem I. The polypeptide is Ferredoxin C 2, chloroplastic (Arabidopsis thaliana (Mouse-ear cress)).